The following is a 1074-amino-acid chain: Semaphorin-5A (1074 aa).

Positions 1-22 (MKGTCVIAWLFSSLGLWRLAHP) are cleaved as a signal peptide. Residues 23 to 968 (EAQGTTQCQR…EEKRCGEFNM (946 aa)) are Extracellular-facing. A Sema domain is found at 35-484 (HPVISYKEIG…LREHVVKIPL (450 aa)). 2 disulfide bridges follow: Cys104/Cys114 and Cys131/Cys140. N-linked (GlcNAc...) asparagine glycosylation is found at Asn142, Asn168, Asn227, and Asn277. Intrachain disulfides connect Cys254–Cys357 and Cys278–Cys320. Residues Asn323, Asn367, and Asn437 are each glycosylated (N-linked (GlcNAc...) asparagine). Cystine bridges form between Cys487/Cys504 and Cys496/Cys513. 2 N-linked (GlcNAc...) asparagine glycosylation sites follow: Asn536 and Asn591. 7 TSP type-1 domains span residues 540–593 (DGHF…ANCS), 595–651 (NGGW…LLCP), 653–702 (HMFW…NPCP), 707–765 (TTPW…GCST), 784–839 (NGAW…LPCP), 841–896 (DGVW…QPCP), and 897–944 (ESWS…VFDS). Cystine bridges form between Cys607–Cys644, Cys611–Cys650, Cys622–Cys634, Cys665–Cys696, Cys669–Cys701, and Cys680–Cys686. Asn717 is a glycosylation site (N-linked (GlcNAc...) asparagine). Cystine bridges form between Cys796–Cys833, Cys800–Cys838, Cys811–Cys823, Cys853–Cys890, Cys857–Cys895, and Cys868–Cys880. A glycan (N-linked (GlcNAc...) asparagine) is linked at Asn933. A helical transmembrane segment spans residues 969 to 989 (FHMIAVGLSSSILGCLLTLLV). Residues 990 to 1074 (YTYCQRYQQQ…FTDLNNYDEY (85 aa)) lie on the Cytoplasmic side of the membrane.

Belongs to the semaphorin family. Binds PLXNB3.

It is found in the membrane. Functionally, bifunctional axonal guidance cue regulated by sulfated proteoglycans; attractive effects result from interactions with heparan sulfate proteoglycans (HSPGs), while the inhibitory effects depend on interactions with chondroitin sulfate proteoglycans (CSPGs). Ligand for receptor PLXNB3. In glioma cells, SEMA5A stimulation of PLXNB3 results in the disassembly of F-actin stress fibers, disruption of focal adhesions and cellular collapse as well as inhibition of cell migration and invasion through ARHGDIA-mediated inactivation of RAC1. May promote angiogenesis by increasing endothelial cell proliferation and migration and inhibiting apoptosis. The protein is Semaphorin-5A (SEMA5A) of Homo sapiens (Human).